Reading from the N-terminus, the 211-residue chain is Imidazole glycerol phosphate synthase subunit HisH (211 aa).

Positions 1 to 211 (MIGIIDYGMG…ASIIEGKGSM (211 aa)) constitute a Glutamine amidotransferase type-1 domain. The Nucleophile role is filled by C79. Catalysis depends on residues H186 and E188.

As to quaternary structure, heterodimer of HisH and HisF.

The protein localises to the cytoplasm. It carries out the reaction 5-[(5-phospho-1-deoxy-D-ribulos-1-ylimino)methylamino]-1-(5-phospho-beta-D-ribosyl)imidazole-4-carboxamide + L-glutamine = D-erythro-1-(imidazol-4-yl)glycerol 3-phosphate + 5-amino-1-(5-phospho-beta-D-ribosyl)imidazole-4-carboxamide + L-glutamate + H(+). The enzyme catalyses L-glutamine + H2O = L-glutamate + NH4(+). Its pathway is amino-acid biosynthesis; L-histidine biosynthesis; L-histidine from 5-phospho-alpha-D-ribose 1-diphosphate: step 5/9. Its function is as follows. IGPS catalyzes the conversion of PRFAR and glutamine to IGP, AICAR and glutamate. The HisH subunit catalyzes the hydrolysis of glutamine to glutamate and ammonia as part of the synthesis of IGP and AICAR. The resulting ammonia molecule is channeled to the active site of HisF. This chain is Imidazole glycerol phosphate synthase subunit HisH, found in Geobacillus sp. (strain WCH70).